The following is a 442-amino-acid chain: ATP-dependent protease ATPase subunit HslU (442 aa).

ATP-binding positions include I18 and 60-65; that span reads GVGKTE. The interval 136–156 is disordered; sequence LPKPKNDWDSTDSDANSNTRQ. ATP contacts are provided by D255, E320, and R392.

The protein belongs to the ClpX chaperone family. HslU subfamily. A double ring-shaped homohexamer of HslV is capped on each side by a ring-shaped HslU homohexamer. The assembly of the HslU/HslV complex is dependent on binding of ATP.

It is found in the cytoplasm. ATPase subunit of a proteasome-like degradation complex; this subunit has chaperone activity. The binding of ATP and its subsequent hydrolysis by HslU are essential for unfolding of protein substrates subsequently hydrolyzed by HslV. HslU recognizes the N-terminal part of its protein substrates and unfolds these before they are guided to HslV for hydrolysis. This Shewanella sp. (strain MR-7) protein is ATP-dependent protease ATPase subunit HslU.